The following is a 388-amino-acid chain: Methylthioribose-1-phosphate isomerase (388 aa).

D258 serves as the catalytic Proton donor.

The protein belongs to the eIF-2B alpha/beta/delta subunits family. MtnA subfamily.

The protein localises to the cytoplasm. It localises to the nucleus. The catalysed reaction is 5-(methylsulfanyl)-alpha-D-ribose 1-phosphate = 5-(methylsulfanyl)-D-ribulose 1-phosphate. Its pathway is amino-acid biosynthesis; L-methionine biosynthesis via salvage pathway; L-methionine from S-methyl-5-thio-alpha-D-ribose 1-phosphate: step 1/6. In terms of biological role, catalyzes the interconversion of methylthioribose-1-phosphate (MTR-1-P) into methylthioribulose-1-phosphate (MTRu-1-P). The sequence is that of Methylthioribose-1-phosphate isomerase (mri-1) from Neurospora crassa (strain ATCC 24698 / 74-OR23-1A / CBS 708.71 / DSM 1257 / FGSC 987).